Here is a 347-residue protein sequence, read N- to C-terminus: Transcription factor EC (347 aa).

The necessary for transcriptional transactivation stretch occupies residues 1–119 (MTLDHQIINP…GLTSASCPSS (119 aa)). The bHLH domain maps to 139-192 (QKKDNHNLIERRRRYNINYRIKELGTLIPKSNDPDMRWNKGTILKASVEYIKWL). The interval 271-347 (PSPELCDQAI…SFSSDDGDEL (77 aa)) is necessary for transcriptional transactivation. The interval 319-347 (DPLLSATSPAVSKESSRRSSFSSDDGDEL) is disordered. Residues 326-341 (SPAVSKESSRRSSFSS) are compositionally biased toward low complexity.

It belongs to the MiT/TFE family. As to quaternary structure, homodimer. Forms heterodimers with TFE3. Forms heterodimers with MITF. Interacts with MITF. Expressed moderately in spleen, kidney, bone marrow, small intestine and leukocytes. Expressed weakly in testis, trachea and colon.

The protein localises to the nucleus. Functionally, transcriptional regulator that acts as a repressor or an activator. Acts as a transcriptional repressor on minimal promoter containing element F (that includes an E-box sequence). Binds to element F in an E-box sequence-specific manner. Acts as a transcriptional transactivator on the proximal promoter region of the tartrate-resistant acid phosphatase (TRAP) E-box containing promoter. Collaborates with MITF in target gene activation. Acts as a transcriptional repressor on minimal promoter containing mu E3 enhancer sequence. Binds to mu E3 DNA sequence of the immunoglobulin heavy-chain gene enhancer. Binds DNA in a homo- or heterodimeric form. This is Transcription factor EC (TFEC) from Homo sapiens (Human).